Consider the following 217-residue polypeptide: Octanoyltransferase (217 aa).

Residues 35–214 form the BPL/LPL catalytic domain; the sequence is DEAGERIWLL…TLPAFLDKLR (180 aa). Substrate is bound by residues 73 to 80, 145 to 147, and 158 to 160; these read RGGRYTYH, AIG, and GFS. The active-site Acyl-thioester intermediate is the Cys176.

This sequence belongs to the LipB family.

The protein localises to the cytoplasm. The enzyme catalyses octanoyl-[ACP] + L-lysyl-[protein] = N(6)-octanoyl-L-lysyl-[protein] + holo-[ACP] + H(+). It participates in protein modification; protein lipoylation via endogenous pathway; protein N(6)-(lipoyl)lysine from octanoyl-[acyl-carrier-protein]: step 1/2. Functionally, catalyzes the transfer of endogenously produced octanoic acid from octanoyl-acyl-carrier-protein onto the lipoyl domains of lipoate-dependent enzymes. Lipoyl-ACP can also act as a substrate although octanoyl-ACP is likely to be the physiological substrate. This is Octanoyltransferase from Sphingopyxis alaskensis (strain DSM 13593 / LMG 18877 / RB2256) (Sphingomonas alaskensis).